We begin with the raw amino-acid sequence, 308 residues long: MVVGRGLLGRRSLAALGAACARRGLGPALLGVFCHTDLRKNLTVDEGTMKVEVLPALTDNYMYLVIDDETKEAAIVDPVQPQKVVDAARKHGVKLTTVLTTHHHWDHAGGNEKLVKLESGLKVYGGDDRIGALTHKITHLSTLQVGSLNVKCLATPCHTSGHICYFVSKPGGSEPPAVFTGDTLFVAGCGKFYEGTADEMCKALLEVLGRLPPDTRVYCGHEYTINNLKFARHVEPGNAAIREKLAWAKEKYSIGEPTVPSTLAEEFTYNPFMRVREKTVQQHAGETDPVTTMRAVRREKDQFKMPRD.

A mitochondrion-targeting transit peptide spans 1–13 (MVVGRGLLGRRSL). Residues His-102, His-104, Asp-106, and His-107 each contribute to the Zn(2+) site. At Lys-116 the chain carries N6-acetyllysine. Positions 158 and 182 each coordinate Zn(2+). Substrate contacts are provided by residues 191 to 193 (KFY) and 221 to 223 (HEY). Residue His-221 coordinates Zn(2+). At Lys-229 the chain carries N6-acetyllysine; alternate. At Lys-229 the chain carries N6-succinyllysine; alternate. Substrate is bound at residue 297-300 (RREK).

This sequence belongs to the metallo-beta-lactamase superfamily. Glyoxalase II family. In terms of assembly, monomer. It depends on Zn(2+) as a cofactor. Expressed in liver and kidney.

It is found in the mitochondrion matrix. It localises to the cytoplasm. The enzyme catalyses an S-(2-hydroxyacyl)glutathione + H2O = a 2-hydroxy carboxylate + glutathione + H(+). It catalyses the reaction (R)-S-lactoylglutathione + H2O = (R)-lactate + glutathione + H(+). Its pathway is secondary metabolite metabolism; methylglyoxal degradation; (R)-lactate from methylglyoxal: step 2/2. Thiolesterase that catalyzes the hydrolysis of S-D-lactoyl-glutathione to form glutathione and D-lactic acid. The sequence is that of Hydroxyacylglutathione hydrolase, mitochondrial (HAGH) from Homo sapiens (Human).